A 235-amino-acid polypeptide reads, in one-letter code: MDKKILVVDDEKPIADILEFNLRKEGYEVHCAHDGNEAVEMVEELQPDLILLDIMLPNKDGVEVCREVRKKYDMPIIMLTAKDSEIDKVIGLEIGADDYVTKPFSTRELLARVKANLRRQLTTAPAEEEPSSNEIHIGSLVIFPDAYVVSKRDETIELTHREFELLHYLAKHIGQVMTREHLLQTVWGYDYFGDVRTVDVTVRRLREKIEDNPSHPNWIVTRRGVGYYLRNPEQD.

The Response regulatory domain occupies 4-117; the sequence is KILVVDDEKP…ELLARVKANL (114 aa). 4-aspartylphosphate is present on Asp53. The segment at residues 132–231 is a DNA-binding region (ompR/PhoB-type); the sequence is SNEIHIGSLV…RRGVGYYLRN (100 aa).

As to quaternary structure, homodimer. Post-translationally, phosphorylated by WalK.

The protein localises to the cytoplasm. Functionally, member of the two-component regulatory system WalK/WalR involved in the regulation of the ftsAZ operon, the yocH, ykvT, cwlO, lytE, ydjM, yjeA, yoeB genes and the tagAB and tagDEF operons. Binds to the ftsAZ P1 promoter sequence in vitro. WalR has been shown to directly bind to the regulatory regions of yocH, ykvT, tagAB/tagDEF. Activates cwlO, lytE and ydjM and represses yoeB and yjeA. The sequence is that of Transcriptional regulatory protein WalR from Bacillus subtilis (strain 168).